The following is a 334-amino-acid chain: Lipoyl synthase (334 aa).

Residues 8 to 33 (LNNDTRPKVEAPARPRHPEKAHRPDT) are disordered. Residues 12-33 (TRPKVEAPARPRHPEKAHRPDT) show a composition bias toward basic and acidic residues. [4Fe-4S] cluster is bound by residues Cys68, Cys73, Cys79, Cys94, Cys98, Cys101, and Ser307. A Radical SAM core domain is found at 80 to 296 (WEKRHATFMI…ETTAYAKGFL (217 aa)).

It belongs to the radical SAM superfamily. Lipoyl synthase family. [4Fe-4S] cluster is required as a cofactor.

The protein localises to the cytoplasm. It carries out the reaction [[Fe-S] cluster scaffold protein carrying a second [4Fe-4S](2+) cluster] + N(6)-octanoyl-L-lysyl-[protein] + 2 oxidized [2Fe-2S]-[ferredoxin] + 2 S-adenosyl-L-methionine + 4 H(+) = [[Fe-S] cluster scaffold protein] + N(6)-[(R)-dihydrolipoyl]-L-lysyl-[protein] + 4 Fe(3+) + 2 hydrogen sulfide + 2 5'-deoxyadenosine + 2 L-methionine + 2 reduced [2Fe-2S]-[ferredoxin]. Its pathway is protein modification; protein lipoylation via endogenous pathway; protein N(6)-(lipoyl)lysine from octanoyl-[acyl-carrier-protein]: step 2/2. Functionally, catalyzes the radical-mediated insertion of two sulfur atoms into the C-6 and C-8 positions of the octanoyl moiety bound to the lipoyl domains of lipoate-dependent enzymes, thereby converting the octanoylated domains into lipoylated derivatives. The sequence is that of Lipoyl synthase from Methylorubrum populi (strain ATCC BAA-705 / NCIMB 13946 / BJ001) (Methylobacterium populi).